A 107-amino-acid chain; its full sequence is Protein KleE (107 aa).

The chain is Protein KleE (kleE) from Escherichia coli.